A 440-amino-acid chain; its full sequence is Muscarinic acetylcholine receptor M2 (440 aa).

A helical transmembrane segment spans residues 1–19 (VLVAGSLSLVTIIGNILVM). The Cytoplasmic segment spans residues 20–33 (VSIKVNRHLQTVNN). The chain crosses the membrane as a helical span at residues 34-54 (YFLFSLACADLIIGVFSMNLY). The Extracellular segment spans residues 55–71 (TLYTVIGYWPLGPVVCD). Cysteine 70 and cysteine 150 are joined by a disulfide. A helical membrane pass occupies residues 72–93 (LWLALDYVVSNASVMNLLIISF). Residues 94 to 96 (DRY) carry the Important for signaling motif. Residues 94–113 (DRYFCVTKPLTYPVKRTTKM) lie on the Cytoplasmic side of the membrane. The helical transmembrane segment at 114–136 (AGMMIAAAWVLSFILWAPAILFW) threads the bilayer. Topologically, residues 137-158 (QFIVGVRTVEDGECYIQFFSNA) are extracellular. The chain crosses the membrane as a helical span at residues 159–183 (AVTFGTAIAAFYLPVIIMTVLYWHI). The Cytoplasmic segment spans residues 184-361 (SRASKSRIKK…PPSREKKVTR (178 aa)). The segment at 192 to 329 (KKDKKEPVAN…VVGSSGQNGD (138 aa)) is disordered. Phosphoserine is present on serine 206. Over residues 228 to 244 (GLEHNKIQNGKAPRDPV) the composition is skewed to basic and acidic residues. Composition is skewed to polar residues over residues 258–267 (NDSTSVSAVA), 278–287 (DENTVSTSLG), and 308–327 (SDSC…SGQN). A helical transmembrane segment spans residues 362-384 (TILAILLAFIITWAPYNVMVLIN). The Extracellular portion of the chain corresponds to 385–392 (TFCAPCIP). A disulfide bridge links cysteine 387 with cysteine 390. The helical transmembrane segment at 393–416 (NTVWTIGYWLCYINSTINPACYAL) threads the bilayer. The short motif at 410 to 414 (NPACY) is the Important for signaling element. The Cytoplasmic portion of the chain corresponds to 417–440 (CNATFKKTFKHLLMCHYKNIGATR). 3 positions are modified to phosphothreonine: threonine 420, threonine 424, and threonine 439.

Belongs to the G-protein coupled receptor 1 family. Muscarinic acetylcholine receptor subfamily. CHRM2 sub-subfamily. In terms of assembly, interacts with ARRB1 and ARRB2. Interacts with RACK1; the interaction regulates CHRM2 internalization. Post-translationally, phosphorylated in response to agonist treatment.

Its subcellular location is the cell membrane. The protein resides in the postsynaptic cell membrane. Its function is as follows. The muscarinic acetylcholine receptor mediates various cellular responses, including inhibition of adenylate cyclase, breakdown of phosphoinositides and modulation of potassium channels through the action of G proteins. Primary transducing effect is adenylate cyclase inhibition. Signaling promotes phospholipase C activity, leading to the release of inositol trisphosphate (IP3); this then triggers calcium ion release into the cytosol. This Pan troglodytes (Chimpanzee) protein is Muscarinic acetylcholine receptor M2 (CHRM2).